Reading from the N-terminus, the 101-residue chain is MADPRRPARVTRYKPPTTESNPALEDPTPDYMNLLGMVFSMCGLMLKLKWCAWIAVYCSFISFANSRSSEDTKQMMSSFMLSISAVVMSYLQNPQPMSPPW.

The segment at Met-1–Asp-26 is disordered. At Met-1–Pro-27 the chain is on the cytoplasmic side. A helical membrane pass occupies residues Thr-28–Leu-46. Position 47 (Lys-47) is a topological domain, lumenal. Residues Leu-48–Asn-65 form a helical membrane-spanning segment. Topologically, residues Ser-66–Ser-69 are cytoplasmic. A helical membrane pass occupies residues Glu-70–Tyr-90. The Lumenal segment spans residues Leu-91 to Trp-101.

It belongs to the Asterix family. In terms of assembly, component of the multi-pass translocon (MPT) complex.

The protein localises to the endoplasmic reticulum membrane. Component of the multi-pass translocon (MPT) complex that mediates insertion of multi-pass membrane proteins into the lipid bilayer of membranes. The MPT complex takes over after the SEC61 complex: following membrane insertion of the first few transmembrane segments of proteins by the SEC61 complex, the MPT complex occludes the lateral gate of the SEC61 complex to promote insertion of subsequent transmembrane regions. In Gallus gallus (Chicken), this protein is PAT complex subunit Asterix (WDR83OS).